Here is a 975-residue protein sequence, read N- to C-terminus: Homeobox protein cut-like 1 (975 aa).

Positions 1–73 (SRQVKEQLIK…ILALRSIQGR (73 aa)) form a DNA-binding region, CUT 1. Disordered regions lie at residues 90–113 (PKRR…GSDE) and 126–148 (LQVQ…TSDD). The stretch at 113–169 (EAIKSILEQAKRELQVQKTAEPAQPSSTSSSGTSDDAIRSILQQARREMEAQQAALD) forms a coiled coil. Phosphoserine is present on Ser207. Positions 209 to 246 (KKPPTAPDTSASTLPNPPALKKESQDAPGLDLPGAAES) are disordered. Residues Lys229, Lys255, and Lys286 each participate in a glycyl lysine isopeptide (Lys-Gly) (interchain with G-Cter in SUMO2) cross-link. A compositionally biased stretch (basic and acidic residues) spans 262 to 297 (GVWKDHWWSTVQPERKSAAPPEDAKSEEAGGTKEKG). Residues 262 to 369 (GVWKDHWWST…SKPAKPSVPP (108 aa)) are disordered. The segment covering 328–351 (RTPQSSELSLTGASRSETPQNSPL) has biased composition (polar residues). Ser349 bears the Phosphoserine mark. A DNA-binding region (CUT 2) is located at residues 374-461 (QYEIYMYQEV…QGVLPVQGQQ (88 aa)). The segment covering 476 to 489 (LQQGCVSSESTPKT) has biased composition (polar residues). A disordered region spans residues 476 to 549 (LQQGCVSSES…SQPATPLPLS (74 aa)). A compositionally biased stretch (low complexity) spans 490 to 506 (SASCSPAPESPMSSSES). A phosphoserine mark is found at Ser499 and Ser509. The CUT 3 DNA-binding region spans 557–644 (QELVAMSPEL…VEKLMDMKRM (88 aa)). A disordered region spans residues 652–687 (RRHSSVSDSQPCEPPSVGIDYSQGASPQPQHQLKKP). A DNA-binding region (homeobox) is located at residues 684-743 (LKKPRVVLAPEEKEALKRAYQQKPYPSPKTIEELATQLNLKTSTVINWFHNYRSRIRREL). Ser710 carries the post-translational modification Phosphoserine. A Glycyl lysine isopeptide (Lys-Gly) (interchain with G-Cter in SUMO2) cross-link involves residue Lys724. A disordered region spans residues 752–949 (SQGQAGARHS…DSRDNPLRKK (198 aa)). Residues 756–773 (AGARHSPSARSSGAAPSS) show a composition bias toward low complexity. Ser777 carries the post-translational modification Phosphoserine. Residues 780–813 (GVEAAEGPGAADAEESAPAAAAKSQGGPAEAAVA) are compositionally biased toward low complexity. The span at 838-847 (PGRRGGGGPA) shows a compositional bias: gly residues. A compositionally biased stretch (low complexity) spans 850–860 (APAAPAAAARG). Residues 861–890 (PSRRPGARAKPRRRRRRRRRHARGGGRRYL) are compositionally biased toward basic residues. The segment covering 907–929 (RSSALPSTSAPAAARRPSSLQSL) has biased composition (low complexity). Position 925 is a phosphoserine (Ser925). The segment covering 937-946 (GARDSRDNPL) has biased composition (basic and acidic residues). Ser956 and Ser966 each carry phosphoserine.

It belongs to the CUT homeobox family. In terms of assembly, interacts with BANP. Post-translationally, as cells progress into S phase, a fraction of CUX1 molecules is proteolytically processed into N-terminally truncated proteins of 110 kDa by CTSL. Cell cycle-dependent processing of CUX1 serves to generate a CDP/Cux p110 with distinct DNA binding and transcriptional properties. In terms of processing, phosphorylated by PKA. In terms of tissue distribution, a broad pattern of expression observed in tissues of diverse origins, such as cartilage, liver, brain, lung, heart and skeletal muscle. There are 2 distinct protein species: the larger one (230-250 kDa) is found mainly in adult brain, lung and heart, and the smaller one (180-190 kDa) predominates in early embryonic tissues.

The protein resides in the nucleus. Functionally, transcription factor involved in the control of neuronal differentiation in the brain. Regulates dendrite development and branching, and dendritic spine formation in cortical layers II-III. Also involved in the control of synaptogenesis. In addition, it has probably a broad role in mammalian development as a repressor of developmentally regulated gene expression. May act by preventing binding of positively-activing CCAAT factors to promoters. Component of nf-munr repressor; binds to the matrix attachment regions (MARs) (5' and 3') of the immunoglobulin heavy chain enhancer. Represses T-cell receptor (TCR) beta enhancer function by binding to MARbeta, an ATC-rich DNA sequence located upstream of the TCR beta enhancer. Binds to the TH enhancer; may require the basic helix-loop-helix protein TCF4 as a coactivator. In terms of biological role, plays a role in cell cycle progression, in particular at the G1/S transition. As cells progress into S phase, a fraction of CUX1 molecules is proteolytically processed into N-terminally truncated proteins of 110 kDa. While CUX1 only transiently binds to DNA and carries the CCAAT-displacement activity, CDP/Cux p110 makes a stable interaction with DNA and stimulates expression of genes such as POLA1. This chain is Homeobox protein cut-like 1 (CUX1), found in Canis lupus familiaris (Dog).